The following is a 602-amino-acid chain: Potassium-transporting ATPase potassium-binding subunit (602 aa).

The next 4 helical transmembrane spans lie at 5-25, 65-85, 136-156, and 179-199; these read AMLQLGLFLVVLIALAWPLGA, GYAVALILFNVLGVAAVYALQ, GLTVQNFVSAATGAAVVIALI, and LYVLLPLAVVFALVFTQQGAI. A disordered region spans residues 221–248; it reads QDAKGNPVLGKDGKPVMEDKTSQTQTLP. Basic and acidic residues predominate over residues 231-241; sequence KDGKPVMEDKT. Transmembrane regions (helical) follow at residues 283 to 303, 312 to 332, 419 to 439, 458 to 478, 523 to 543, and 566 to 586; these read LANFLQDIAIFLIPAALCFLF, QGWAILAAMTIMFATAVVVET, GLYGMLIFAILAVFIAGLMVG, AITILVTPTLVLALTAIAVSL, IMTGLAMFFGRFFMIVPILAI, and LFVTLLIGTVLLVGALNYVPA.

It belongs to the KdpA family. The system is composed of three essential subunits: KdpA, KdpB and KdpC.

The protein localises to the cell inner membrane. In terms of biological role, part of the high-affinity ATP-driven potassium transport (or Kdp) system, which catalyzes the hydrolysis of ATP coupled with the electrogenic transport of potassium into the cytoplasm. This subunit binds the periplasmic potassium ions and delivers the ions to the membrane domain of KdpB through an intramembrane tunnel. The chain is Potassium-transporting ATPase potassium-binding subunit from Chromobacterium violaceum (strain ATCC 12472 / DSM 30191 / JCM 1249 / CCUG 213 / NBRC 12614 / NCIMB 9131 / NCTC 9757 / MK).